The chain runs to 260 residues: MENEVNAGTASSSRWNPTKDQITLLENLYKEGIRTPSADQIQQITGRLRAYGHIEGKNVFYWFQNHKARQRQKQKQERMAYFNRLLHKTSRFFYPPPCSNVGCVSPYYLQQASDHHMNQHGSVYTNDLLHRNNVMIPSGGYEKRTVTQHQKQLSDIRTTAATRMPISPSSLRFDRFALRDNCYAGEDINVNSSGRKTLPLFPLQPLNASNADGMGSSSFALGSDSPVDCSSDGAGREQPFIDFFSGGSTSTRFDSNGNGL.

The homeobox; WUS-type DNA-binding region spans 10-74 (ASSSRWNPTK…NHKARQRQKQ (65 aa)).

Belongs to the WUS homeobox family.

It is found in the nucleus. Its function is as follows. Probable transcription factor involved in embryonic patterning. Required for apical embryo development after fertilization. Its specific localization to the apical daughter cell of the zygote, while WOX8 is confined to the basal cell, suggests that the asymmetric division of the plant zygote separates determinants of apical and basal cell fates. This Arabidopsis thaliana (Mouse-ear cress) protein is WUSCHEL-related homeobox 2 (WOX2).